The following is a 248-amino-acid chain: 5'-nucleotidase SurE (248 aa).

Residues aspartate 8, aspartate 9, serine 39, and asparagine 91 each coordinate a divalent metal cation.

This sequence belongs to the SurE nucleotidase family. A divalent metal cation is required as a cofactor.

It is found in the cytoplasm. The catalysed reaction is a ribonucleoside 5'-phosphate + H2O = a ribonucleoside + phosphate. Functionally, nucleotidase that shows phosphatase activity on nucleoside 5'-monophosphates. This chain is 5'-nucleotidase SurE, found in Pseudoalteromonas atlantica (strain T6c / ATCC BAA-1087).